The primary structure comprises 252 residues: MFS-type transporter cctQ (252 aa).

The next 2 membrane-spanning stretches (helical) occupy residues 54–74 (IGSL…VVLP) and 116–136 (FGSF…IVGF). An N-linked (GlcNAc...) asparagine glycan is attached at Asn-179. The next 2 membrane-spanning stretches (helical) occupy residues 180–200 (FSIC…WILA) and 208–228 (FLVW…YFTT).

This sequence belongs to the major facilitator superfamily.

The protein resides in the membrane. It functions in the pathway mycotoxin biosynthesis. Functionally, MFS-type transporter; part of the gene cluster that mediates the biosynthesis of the mycotoxin cyclochlorotine, a hepatotoxic and carcinogenic cyclic chlorinated pentapeptide. Most likely responsible for cyclochlorotine secretion and thereby may contribute to intrinsic resistance. This is MFS-type transporter cctQ from Talaromyces islandicus (Penicillium islandicum).